Reading from the N-terminus, the 315-residue chain is Olfactory receptor 51L1 (315 aa).

Topologically, residues 1-27 are extracellular; that stretch reads MGDWNNSDAVEPIFILRGFPGLEYVHS. The N-linked (GlcNAc...) asparagine glycan is linked to Asn-5. Residues 28–48 form a helical membrane-spanning segment; sequence WLSILFCLAYLVAFMGNVTIL. Residues 49 to 56 are Cytoplasmic-facing; that stretch reads SVIWIESS. The helical transmembrane segment at 57 to 77 threads the bilayer; it reads LHQPMYYFISILAVNDLGMSL. Residues 78–101 lie on the Extracellular side of the membrane; the sequence is STLPTMLAVLWLDAPEIQASACYA. Residues Cys-99 and Cys-191 are joined by a disulfide bond. The chain crosses the membrane as a helical span at residues 102-122; sequence QLFFIHTFTFLESSVLLAMAF. Residues 123–141 are Cytoplasmic-facing; the sequence is DRFVAICHPLHYPTILTNS. The chain crosses the membrane as a helical span at residues 142-162; it reads VIGKIGLACLLRSLGVVLPTP. The Extracellular segment spans residues 163–198; the sequence is LLLRHYHYCHGNALSHAFCLHQDVLRLSCTDARTNS. Residues 199 to 219 form a helical membrane-spanning segment; the sequence is IYGLCVVIATLGVDSIFILLS. Residues 220-239 lie on the Cytoplasmic side of the membrane; the sequence is YVLILNTVLDIASREEQLKA. The helical transmembrane segment at 240-260 threads the bilayer; that stretch reads LNTCVSHICVVLIFFVPVIGV. Over 261–275 the chain is Extracellular; sequence SMVHRFGKHLSPIVH. The helical transmembrane segment at 276–296 threads the bilayer; that stretch reads ILMADIYLLLPPVLNPIVYSV. The Cytoplasmic portion of the chain corresponds to 297 to 315; it reads RTKQIRLGILHKFVLRRRF.

This sequence belongs to the G-protein coupled receptor 1 family.

The protein localises to the cell membrane. Odorant receptor. In Homo sapiens (Human), this protein is Olfactory receptor 51L1 (OR51L1).